A 344-amino-acid polypeptide reads, in one-letter code: Methionine import ATP-binding protein MetN 1 (344 aa).

The ABC transporter domain occupies 2–241 (IEIRNLSQRF…PHHEVTRALI (240 aa)). 38–45 (GRSGAGKS) contributes to the ATP binding site.

It belongs to the ABC transporter superfamily. Methionine importer (TC 3.A.1.24) family. In terms of assembly, the complex is composed of two ATP-binding proteins (MetN), two transmembrane proteins (MetI) and a solute-binding protein (MetQ).

The protein resides in the cell inner membrane. The enzyme catalyses L-methionine(out) + ATP + H2O = L-methionine(in) + ADP + phosphate + H(+). The catalysed reaction is D-methionine(out) + ATP + H2O = D-methionine(in) + ADP + phosphate + H(+). Functionally, part of the ABC transporter complex MetNIQ involved in methionine import. Responsible for energy coupling to the transport system. The polypeptide is Methionine import ATP-binding protein MetN 1 (Burkholderia mallei (strain ATCC 23344)).